The following is a 381-amino-acid chain: cAMP-dependent protein kinase type I-beta regulatory subunit (381 aa).

Residues 1 to 136 are dimerization and phosphorylation; sequence MASPSCFHSE…ALAKAISKNV (136 aa). The residue at position 3 (Ser-3) is a Phosphoserine. Tyr-21 bears the 3'-nitrotyrosine mark. The segment at 66–88 is disordered; it reads LARQKSNSQCDSHDEEISPTPPN. A phosphoserine mark is found at Ser-77 and Ser-83. A Phosphothreonine modification is found at Thr-85. A Pseudophosphorylation motif motif is present at residues 96 to 100; sequence RRGGV. Omega-N-methylarginine is present on Arg-97. 3',5'-cyclic AMP-binding positions include 137–254, Glu-202, Arg-211, 255–381, Glu-326, and Arg-335; these read LFSH…SKVS and ILES…SLTV.

It belongs to the cAMP-dependent kinase regulatory chain family. The inactive holoenzyme is composed of two regulatory chains and two catalytic chains. Activation by cAMP releases the two active catalytic monomers and the regulatory dimer. Interacts with PRKX; regulates this cAMP-dependent protein kinase. Interacts with smAKAP; this interaction may target PRKAR1B to the plasma membrane. In terms of processing, the pseudophosphorylation site binds to the substrate-binding region of the catalytic chain, resulting in the inhibition of its activity. In terms of tissue distribution, four types of regulatory chains are found: I-alpha, I-beta, II-alpha, and II-beta. Their expression varies among tissues and is in some cases constitutive and in others inducible.

The protein resides in the cell membrane. Its function is as follows. Regulatory subunit of the cAMP-dependent protein kinases involved in cAMP signaling in cells. The sequence is that of cAMP-dependent protein kinase type I-beta regulatory subunit (Prkar1b) from Mus musculus (Mouse).